A 51-amino-acid chain; its full sequence is Sperm protamine P1 (51 aa).

Cystine bridges form between cysteine 7/cysteine 15 and cysteine 38/cysteine 48.

This sequence belongs to the protamine P1 family. Cross-linked by interchain disulfide bonds around the DNA-helix. Phosphorylated by SRPK1. As to expression, testis.

It is found in the nucleus. The protein localises to the chromosome. Functionally, protamines substitute for histones in the chromatin of sperm during the haploid phase of spermatogenesis. They compact sperm DNA into a highly condensed, stable and inactive complex. In Mus musculus (Mouse), this protein is Sperm protamine P1 (Prm1).